A 458-amino-acid polypeptide reads, in one-letter code: MSSGRIVQIIGAVIDVEFPRDAVPSIYEALKVQGVETTLEVQQQLGDGVVRSIAMGSTEGLKRGLNVDSTGAAISVPVGKATLGRIMDVLGNPIDEAGPIGEEERWGIHREAPSYADQAGGNELLETGIKVIDLVCPFAKGGKVGLFGGAGVGKTVNMMELIRNIAIEHSGYSVFAGVGERTREGNDFYHEMKDSNVLDKVALVYGQMNEPPGNRLRVALTGLTMAEKFRDEGRDVLLFIDNIYRYTLAGTEVSALLGRMPSAVGYQPTLAEEMGVLQERITSTKKGSITSIQAVYVPADDLTDPSPATTFAHLDATVVLSRDIASLGIYPAVDPLDSTSRQLDPLVIGQDHYDTARGVQYVLQRYKELKDIIAILGMDELSEADKLLVARARKIQRFLSQPFFVAEVFTGSPGKYVSLKDTIAGFKGILNGDYDHLPEQAFYMVGGIEEAVEKAKKL.

148–155 (GGAGVGKT) serves as a coordination point for ATP.

It belongs to the ATPase alpha/beta chains family. In terms of assembly, F-type ATPases have 2 components, CF(1) - the catalytic core - and CF(0) - the membrane proton channel. CF(1) has five subunits: alpha(3), beta(3), gamma(1), delta(1), epsilon(1). CF(0) has three main subunits: a(1), b(2) and c(9-12). The alpha and beta chains form an alternating ring which encloses part of the gamma chain. CF(1) is attached to CF(0) by a central stalk formed by the gamma and epsilon chains, while a peripheral stalk is formed by the delta and b chains.

It localises to the cell inner membrane. The catalysed reaction is ATP + H2O + 4 H(+)(in) = ADP + phosphate + 5 H(+)(out). In terms of biological role, produces ATP from ADP in the presence of a proton gradient across the membrane. The catalytic sites are hosted primarily by the beta subunits. The protein is ATP synthase subunit beta of Pseudomonas aeruginosa (strain LESB58).